A 379-amino-acid polypeptide reads, in one-letter code: Succinyl-diaminopimelate desuccinylase (379 aa).

His68 lines the Zn(2+) pocket. Asp70 is a catalytic residue. Asp101 lines the Zn(2+) pocket. The active-site Proton acceptor is the Glu135. 3 residues coordinate Zn(2+): Glu136, Glu164, and His350.

Belongs to the peptidase M20A family. DapE subfamily. As to quaternary structure, homodimer. Requires Zn(2+) as cofactor. Co(2+) serves as cofactor.

The enzyme catalyses N-succinyl-(2S,6S)-2,6-diaminopimelate + H2O = (2S,6S)-2,6-diaminopimelate + succinate. It functions in the pathway amino-acid biosynthesis; L-lysine biosynthesis via DAP pathway; LL-2,6-diaminopimelate from (S)-tetrahydrodipicolinate (succinylase route): step 3/3. Functionally, catalyzes the hydrolysis of N-succinyl-L,L-diaminopimelic acid (SDAP), forming succinate and LL-2,6-diaminopimelate (DAP), an intermediate involved in the bacterial biosynthesis of lysine and meso-diaminopimelic acid, an essential component of bacterial cell walls. The sequence is that of Succinyl-diaminopimelate desuccinylase from Bordetella pertussis (strain Tohama I / ATCC BAA-589 / NCTC 13251).